The chain runs to 721 residues: MPPTATAEPVTASTHMLSNETDYHALNAMLNLYDADGKIQFDKDVLAARQFFLQHVNQNTVFFHNQDEKLDYLIRENYYEREVLDQYSRNFVKSLLDRAYAKKFRFSTFLGAFKYYTSYTLKTFDGKRYLERLEDRVCMVALTLAAGDTGLAEKLVDEIIDGRFQPATPTFLNSGKKQRGEPVSCFLLRIEDNMESIGRSVNSALQLSKRGGGVALLLSNIREHGAPIKNIEHQSSGVIPIMKLLEDAFSYANQLGARQGAGAVYLHAHHPDIYRFLDTKRENADEKIRIKTLSLGVIIPDITFELAKRNEDMYLFSSYDVERVYEVPFADISVTEKYYEMLDDARIRKTKIKAREFFQKLAELQFESGYPYVMFEDTVNRANPIEGKITHSNLCSEILQVSTPSLFNDDLSYAKVGKDISCNLGSLNIAKTMDSPDFAQTVEVAIRALTAVSDQTHIKSVPSIEQGNNDSHAIGLGQMNLHGYLSREGIFYGSEEGVDFTNIYFYTVLFHVLLASNSIAIERGTFFKGFERSKYASGEFFDKYIEQTWEPKTDKVRQLFAEAAIRIPTQNDWKRLKELVVAHGIYNQNLQAVPPTGSISYINHSTSSIHPIVSKVEIRKEGKIGRVYYPAPYMTNDNLQYYQDAYEIGYQKIIDTYAAATQHVDQGLSLTLFFKDTATTRDVNKAQIYAWRKGIKTLYYIRLRQMALEGTEVEGCVSCTL.

Residues T168, 184–185 (SC), G213, 393–397 (NLCSE), and 595–599 (PTGSI) each bind substrate. C185 and C422 are disulfide-bonded. N393 functions as the Proton acceptor in the catalytic mechanism. C395 functions as the Cysteine radical intermediate in the catalytic mechanism. The Proton acceptor role is filled by E397.

It belongs to the ribonucleoside diphosphate reductase large chain family. In terms of assembly, tetramer of two alpha and two beta subunits.

It carries out the reaction a 2'-deoxyribonucleoside 5'-diphosphate + [thioredoxin]-disulfide + H2O = a ribonucleoside 5'-diphosphate + [thioredoxin]-dithiol. With respect to regulation, under complex allosteric control mediated by deoxynucleoside triphosphates and ATP binding. The type of nucleotide bound at the specificity site determines substrate preference. It seems probable that ATP makes the enzyme reduce CDP and UDP, dGTP favors ADP reduction and dTTP favors GDP reduction. Its function is as follows. Provides the precursors necessary for DNA synthesis. Catalyzes the biosynthesis of deoxyribonucleotides from the corresponding ribonucleotides. This chain is Ribonucleoside-diphosphate reductase subunit alpha (nrdE), found in Mycobacterium leprae (strain TN).